The primary structure comprises 161 residues: Allophycocyanin alpha subunit (161 aa).

C81 is a (2R,3E)-phycocyanobilin binding site.

It belongs to the phycobiliprotein family. As to quaternary structure, heterodimer of an alpha and a beta chain. Contains one covalently linked phycocyanobilin chromophore. The chromophore on position 81 is added by the phycocyanobilin lyase CpcUS.

Its subcellular location is the cellular thylakoid membrane. Functionally, light-harvesting photosynthetic bile pigment-protein from the phycobiliprotein complex. Allophycocyanin has a maximum absorption at approximately 650 nanometers. The polypeptide is Allophycocyanin alpha subunit (apcA) (Picosynechococcus sp. (strain ATCC 27264 / PCC 7002 / PR-6) (Agmenellum quadruplicatum)).